Reading from the N-terminus, the 574-residue chain is Splicing factor U2af large subunit A (574 aa).

Residues 1-180 (MAEHEEQPYE…SKRVSGFDQG (180 aa)) form a disordered region. Residues 18-41 (PAPASAYAEYPAPEGSPPAAAAKP) are compositionally biased toward low complexity. Residues 53–143 (RSQHETQPHD…ERRRDRDRDG (91 aa)) show a composition bias toward basic and acidic residues. A compositionally biased stretch (basic residues) spans 144–172 (HRRHRSRSRSPSKGRDRRSRSRSRSRSSK). RRM domains are found at residues 238–321 (RRVY…RPTD), 358–436 (DRIF…RANQ), and 479–565 (QVVS…YPED).

This sequence belongs to the splicing factor SR family.

It localises to the nucleus. Functionally, necessary for the splicing of pre-mRNA. The chain is Splicing factor U2af large subunit A (U2AF65A) from Oryza sativa subsp. japonica (Rice).